A 125-amino-acid chain; its full sequence is Small ribosomal subunit protein uS17 (125 aa).

2 disordered regions span residues 1–21 (MSSSPAQRHTRKTQIGFVSSR) and 101–125 (VAAQVPTKTTASNTPAPAEQPAPQA).

It belongs to the universal ribosomal protein uS17 family. As to quaternary structure, part of the 30S ribosomal subunit.

One of the primary rRNA binding proteins, it binds specifically to the 5'-end of 16S ribosomal RNA. The polypeptide is Small ribosomal subunit protein uS17 (Opitutus terrae (strain DSM 11246 / JCM 15787 / PB90-1)).